Reading from the N-terminus, the 243-residue chain is Purine nucleoside phosphorylase YfiH (243 aa).

Positions 71, 107, and 124 each coordinate Zn(2+).

This sequence belongs to the purine nucleoside phosphorylase YfiH/LACC1 family. In terms of assembly, homodimer. Requires Cu(2+) as cofactor. Zn(2+) serves as cofactor.

It catalyses the reaction adenosine + phosphate = alpha-D-ribose 1-phosphate + adenine. The enzyme catalyses S-methyl-5'-thioadenosine + phosphate = 5-(methylsulfanyl)-alpha-D-ribose 1-phosphate + adenine. The catalysed reaction is inosine + phosphate = alpha-D-ribose 1-phosphate + hypoxanthine. It carries out the reaction adenosine + H2O + H(+) = inosine + NH4(+). In terms of biological role, purine nucleoside enzyme that catalyzes the phosphorolysis of adenosine and inosine nucleosides, yielding D-ribose 1-phosphate and the respective free bases, adenine and hypoxanthine. Also catalyzes the phosphorolysis of S-methyl-5'-thioadenosine into adenine and S-methyl-5-thio-alpha-D-ribose 1-phosphate. Also has adenosine deaminase activity. May also act as a polyphenol oxidase: able to oxidize syringaldazine and 2,2'-azino-bis(3-ethylbenzthiazoline-6-sulfonic acid) (ABTS) in vitro. The chain is Purine nucleoside phosphorylase YfiH from Escherichia coli (strain K12).